Here is a 365-residue protein sequence, read N- to C-terminus: Protein dbl-1 (365 aa).

Residues 1 to 42 (MNDSVRTTTTISSTKSLVHSFQLSAILHLFLLISFTPMSAAA) form the signal peptide. Positions 43–244 (DQHASHATRR…KRSAQTGNSE (202 aa)) are excised as a propeptide. N-linked (GlcNAc...) asparagine glycosylation is found at asparagine 110, asparagine 143, and asparagine 167. The disordered stretch occupies residues 231–259 (SVRRKRSAQTGNSERKNRKKGRKHHNTEA). Positions 246 to 255 (KNRKKGRKHH) are enriched in basic residues. Intrachain disulfides connect cysteine 264–cysteine 330, cysteine 293–cysteine 362, and cysteine 297–cysteine 364. Asparagine 306 carries an N-linked (GlcNAc...) asparagine glycan.

The protein belongs to the TGF-beta family. Homodimer; disulfide-linked. Interacts with drag-1. In terms of tissue distribution, expressed in embryos just prior to hatching and remains constant in most cells throughout the larval and adult stages. Expressed by AVA command interneurons.

The protein localises to the secreted. Functionally, ligand for the serine/threonine-protein kinase receptor type-1 sma-6 which activates a TGF-beta-like signaling pathway. Multifunctional protein that is involved in body size, male ectodermal patterning, innate immunity, lipid metabolism and neural plasticity. Dose-dependent regulator of body size, probably influencing the sizes of some or all cells rather than their number. Plays a role in patterning of male-specific genital sensilla (simple sense organs), known as rays, and mating-associated structures, spicules. Plays a protective role in response to infection by the Gram-negative bacterium S.marcescens, by activating expression of genes involved in innate immunity. Regulator of lipid homeostasis, acting non cell-autonomously in the hypodermis; partly dependent on the Insulin/IGF-1-like signaling (IIS) mediated pathway. Required for aversive olfactory learning of pathogenic bacteria in adults. Involved in gland cell morphology, possibly via activation of a Smad-independent TGF-beta signaling pathway. Required to oppose the autoregulation of expression of Runt-related transcription factor rnt-1. This is Protein dbl-1 from Caenorhabditis elegans.